Consider the following 129-residue polypeptide: Cytochrome c' (129 aa).

Heme c-binding residues include R12, Q13, T69, E70, C119, C122, and H123.

In terms of processing, binds 1 heme c group covalently per subunit.

Cytochrome c' is the most widely occurring bacterial c-type cytochrome. Cytochromes c' are high-spin proteins and the heme has no sixth ligand. Their exact function is not known. This is Cytochrome c' from Rubrivivax gelatinosus (Rhodocyclus gelatinosus).